A 393-amino-acid polypeptide reads, in one-letter code: NAD(P)H-quinone oxidoreductase subunit H, chloroplastic (393 aa).

This sequence belongs to the complex I 49 kDa subunit family. In terms of assembly, NDH is composed of at least 16 different subunits, 5 of which are encoded in the nucleus.

It localises to the plastid. The protein resides in the chloroplast thylakoid membrane. It catalyses the reaction a plastoquinone + NADH + (n+1) H(+)(in) = a plastoquinol + NAD(+) + n H(+)(out). The enzyme catalyses a plastoquinone + NADPH + (n+1) H(+)(in) = a plastoquinol + NADP(+) + n H(+)(out). Functionally, NDH shuttles electrons from NAD(P)H:plastoquinone, via FMN and iron-sulfur (Fe-S) centers, to quinones in the photosynthetic chain and possibly in a chloroplast respiratory chain. The immediate electron acceptor for the enzyme in this species is believed to be plastoquinone. Couples the redox reaction to proton translocation, and thus conserves the redox energy in a proton gradient. This is NAD(P)H-quinone oxidoreductase subunit H, chloroplastic from Trifolium subterraneum (Subterranean clover).